The sequence spans 20 residues: Putative antimicrobial protein 2 (20 aa).

Positions 1–20 (DLPECCSATELELDSGKQTS) are disordered.

Its function is as follows. May have antimicrobial activity. This is Putative antimicrobial protein 2 from Cenchritis muricatus (Beaded periwinkle).